We begin with the raw amino-acid sequence, 90 residues long: RNA-binding protein Hfq (90 aa).

Positions 9 to 69 (DRFLNHLRVN…ISTIIPSSYV (61 aa)) constitute a Sm domain.

It belongs to the Hfq family. Homohexamer.

Its function is as follows. RNA chaperone that binds small regulatory RNA (sRNAs) and mRNAs to facilitate mRNA translational regulation in response to envelope stress, environmental stress and changes in metabolite concentrations. Also binds with high specificity to tRNAs. The chain is RNA-binding protein Hfq from Thermotoga petrophila (strain ATCC BAA-488 / DSM 13995 / JCM 10881 / RKU-1).